We begin with the raw amino-acid sequence, 425 residues long: Protein CLP1 homolog (425 aa).

Residues Glu-18, Lys-59, and 121–126 (DVGKST) contribute to the ATP site.

It belongs to the Clp1 family. Clp1 subfamily.

Its subcellular location is the nucleus. Functionally, required for endonucleolytic cleavage during polyadenylation-dependent pre-mRNA 3'-end formation. The sequence is that of Protein CLP1 homolog (cbc) from Drosophila mojavensis (Fruit fly).